Reading from the N-terminus, the 476-residue chain is H2.0-like homeobox protein (476 aa).

Disordered regions lie at residues 120-169, 328-401, and 413-476; these read QHLP…PSSK, WRHS…HQTT, and TASS…LAGL. Low complexity-rich tracts occupy residues 123–134 and 158–168; these read PQQSPTQQQQPQ and HHSGSAPAPSS. The segment at residues 273–332 is a DNA-binding region (homeobox); sequence RSWSRAVFSNLQRKGLEKRFEIQKYVTKPDRKQLAAMLGLTDAQVKVWFQNRRMKWRHSK. Composition is skewed to basic and acidic residues over residues 331-346 and 355-368; these read SKEA…EAGE and EGER…RSEG. Acidic residues predominate over residues 369–379; sequence EAESESSDSES. Residues 386 to 397 show a composition bias toward basic and acidic residues; it reads DTERTEGTERSL. Low complexity predominate over residues 413–434; the sequence is TASSSTSGSSFSFSSTSSLGSG. Polar residues-rich tracts occupy residues 435–446 and 455–467; these read NTHVGSASSLGG and HQPS…QSPE.

Belongs to the H2.0 homeobox family. Expressed in Th1 cells, CD8-positive T-cells, B-cells and NK cells.

Its subcellular location is the nucleus. Its function is as follows. Transcription factor required for TBX21/T-bet-dependent maturation of Th1 cells as well as maintenance of Th1-specific gene expression. Involved in embryogenesis and hematopoiesis. In Mus musculus (Mouse), this protein is H2.0-like homeobox protein (Hlx).